The chain runs to 227 residues: Phosphoribosylformylglycinamidine synthase subunit PurQ (227 aa).

The Glutamine amidotransferase type-1 domain maps to 3–225; sequence FAVIVFPGSN…LKQWRETYVV (223 aa). The active-site Nucleophile is the cysteine 86. Catalysis depends on residues histidine 194 and glutamate 196.

Part of the FGAM synthase complex composed of 1 PurL, 1 PurQ and 2 PurS subunits.

It localises to the cytoplasm. The enzyme catalyses N(2)-formyl-N(1)-(5-phospho-beta-D-ribosyl)glycinamide + L-glutamine + ATP + H2O = 2-formamido-N(1)-(5-O-phospho-beta-D-ribosyl)acetamidine + L-glutamate + ADP + phosphate + H(+). The catalysed reaction is L-glutamine + H2O = L-glutamate + NH4(+). The protein operates within purine metabolism; IMP biosynthesis via de novo pathway; 5-amino-1-(5-phospho-D-ribosyl)imidazole from N(2)-formyl-N(1)-(5-phospho-D-ribosyl)glycinamide: step 1/2. Functionally, part of the phosphoribosylformylglycinamidine synthase complex involved in the purines biosynthetic pathway. Catalyzes the ATP-dependent conversion of formylglycinamide ribonucleotide (FGAR) and glutamine to yield formylglycinamidine ribonucleotide (FGAM) and glutamate. The FGAM synthase complex is composed of three subunits. PurQ produces an ammonia molecule by converting glutamine to glutamate. PurL transfers the ammonia molecule to FGAR to form FGAM in an ATP-dependent manner. PurS interacts with PurQ and PurL and is thought to assist in the transfer of the ammonia molecule from PurQ to PurL. This is Phosphoribosylformylglycinamidine synthase subunit PurQ from Bacillus cereus (strain 03BB102).